A 485-amino-acid chain; its full sequence is MAHQQQYIHGRYHASTSGEHFETINPATGEVIATVEHAGQAELDAAVESAKQGQKVWSAMSPVERGRILKKAAELLRENNEELARLEVLDTGKPLQEAIVVDIQTGADVIEYYAGLTDKIQGDYQDLGNGNFFYTRREPLGICAGIGAWNYPIQIAMWKSGPALAAGNAMIFKPSEETPLTALKLAEIFTEAGLPDGVFNVIQGDARTGQLITNHPDIDKVSFTGEVGTGKKVMAASAQSLKQVTMELGGKSPMIIFPDMPVDQAVSAAMLANFYTQGEVCTNGTRVFVHADMLDAFTKELKQRTEAMIIGDPMDMDTQVGALISKDHMQKVLGYIQAAKDAGATLLCGGYQVTENGLDKGAFVAPTVFTDCTDDMPQVRDEIFGPVMSVLSFTDEDEVIARANDTKLGLAAGVFTKDFARAHRVINQLQAGICWINSWGASPAEMPVGGYKQSGIGRENGIETLYHYTQNKSVFVDLNDIQSPY.

Residues Thr23, Ile24, and Asp90 each coordinate K(+). 147-149 (GAW) lines the NAD(+) pocket. Lys159 (charge relay system) is an active-site residue. Residues 173–176 (KPSE) and 226–229 (EVGT) contribute to the NAD(+) site. Residue Leu241 participates in K(+) binding. Glu247 serves as the catalytic Proton acceptor. 3 residues coordinate NAD(+): Gly249, Cys281, and Glu382. The Nucleophile role is filled by Cys281. The residue at position 281 (Cys281) is a Cysteine sulfenic acid (-SOH). Positions 452 and 455 each coordinate K(+). Residue Glu459 is the Charge relay system of the active site.

It belongs to the aldehyde dehydrogenase family. Dimer of dimers. It depends on K(+) as a cofactor.

It carries out the reaction betaine aldehyde + NAD(+) + H2O = glycine betaine + NADH + 2 H(+). It participates in amine and polyamine biosynthesis; betaine biosynthesis via choline pathway; betaine from betaine aldehyde: step 1/1. In terms of biological role, involved in the biosynthesis of the osmoprotectant glycine betaine. Catalyzes the irreversible oxidation of betaine aldehyde to the corresponding acid. This chain is Betaine aldehyde dehydrogenase, found in Marinomonas sp. (strain MWYL1).